The following is a 520-amino-acid chain: Cytochrome P450 monooxygenase oblB (520 aa).

The next 3 helical transmembrane spans lie at 17–37 (VAVI…RLFL), 229–249 (LFMG…SILA), and 320–340 (IGTG…HIVV). Residue Cys-462 participates in heme binding.

The protein belongs to the cytochrome P450 family. Requires heme as cofactor.

The protein resides in the membrane. Its pathway is secondary metabolite biosynthesis; terpenoid biosynthesis. Functionally, cytochrome P450 monooxygenase; part of the gene cluster that mediates the biosynthesis of the sesterterpenes ophiobolins, fungal phytotoxins with potential anti-cancer activities. The first step of the pathway is performed by the sesterterpene synthase oblA that possesses both prenyl transferase and terpene cyclase activity, converting isopentenyl diphosphate and dimethylallyl diphosphate into geranylfarnesyl diphosphate (GFPP) and further converting GFPP into ophiobolin F, respectively. Other sesterterpenoids (C(25) terpenoids) are found as minor products of oblA. It is expected that ophiobolin F is then oxidized to ophiobolin A via ophiobolin C and ophiobolin B intermediates by the combined action of the cytochrome P450 monooxygenase oblB and the FAD-dependent oxidoreductase oblC. Although oblB catalyzes multistep oxygenations at C5 and C21/C7 in a relatively efficient manner, it is unable to convert ophiobolin F to ophiobolin C and produces instead several unexpected derivatives. This chain is Cytochrome P450 monooxygenase oblB, found in Aspergillus clavatus (strain ATCC 1007 / CBS 513.65 / DSM 816 / NCTC 3887 / NRRL 1 / QM 1276 / 107).